We begin with the raw amino-acid sequence, 371 residues long: Anhydro-N-acetylmuramic acid kinase (371 aa).

Residue 12 to 20 coordinates ATP; that stretch reads GTVLDGNID.

The protein belongs to the anhydro-N-acetylmuramic acid kinase family.

The catalysed reaction is 1,6-anhydro-N-acetyl-beta-muramate + ATP + H2O = N-acetyl-D-muramate 6-phosphate + ADP + H(+). The protein operates within amino-sugar metabolism; 1,6-anhydro-N-acetylmuramate degradation. Its pathway is cell wall biogenesis; peptidoglycan recycling. In terms of biological role, catalyzes the specific phosphorylation of 1,6-anhydro-N-acetylmuramic acid (anhMurNAc) with the simultaneous cleavage of the 1,6-anhydro ring, generating MurNAc-6-P. Is required for the utilization of anhMurNAc either imported from the medium or derived from its own cell wall murein, and thus plays a role in cell wall recycling. This chain is Anhydro-N-acetylmuramic acid kinase, found in Rhizobium rhizogenes (strain K84 / ATCC BAA-868) (Agrobacterium radiobacter).